A 190-amino-acid chain; its full sequence is Adenylate kinase (190 aa).

11-16 (GAGKGT) lines the ATP pocket. Residues 31 to 60 (STGDIFRFNIKNETELGKLAKTFMDKGDLV) are NMP. Residues Thr-32, Arg-37, 58–60 (DLV), 86–89 (GFPR), and Gln-93 contribute to the AMP site. The segment at 127 to 137 (ERGKTSGRVDD) is LID. Arg-128 serves as a coordination point for ATP. AMP contacts are provided by Arg-134 and Arg-146. Gly-174 contributes to the ATP binding site.

Belongs to the adenylate kinase family. As to quaternary structure, monomer.

The protein localises to the cytoplasm. The enzyme catalyses AMP + ATP = 2 ADP. It participates in purine metabolism; AMP biosynthesis via salvage pathway; AMP from ADP: step 1/1. Its function is as follows. Catalyzes the reversible transfer of the terminal phosphate group between ATP and AMP. Plays an important role in cellular energy homeostasis and in adenine nucleotide metabolism. This Flavobacterium psychrophilum (strain ATCC 49511 / DSM 21280 / CIP 103535 / JIP02/86) protein is Adenylate kinase.